The following is a 329-amino-acid chain: Glycerol-3-phosphate dehydrogenase [NAD(P)+] (329 aa).

2 residues coordinate NADPH: Trp11 and Lys101. Residues Lys101, Gly132, and Ser134 each coordinate sn-glycerol 3-phosphate. Position 136 (Ala136) interacts with NADPH. Residues Lys188, Asp241, Ser251, Arg252, and Asn253 each contribute to the sn-glycerol 3-phosphate site. The active-site Proton acceptor is the Lys188. Arg252 lines the NADPH pocket. Position 278 (Glu278) interacts with NADPH.

This sequence belongs to the NAD-dependent glycerol-3-phosphate dehydrogenase family.

It localises to the cytoplasm. The catalysed reaction is sn-glycerol 3-phosphate + NAD(+) = dihydroxyacetone phosphate + NADH + H(+). The enzyme catalyses sn-glycerol 3-phosphate + NADP(+) = dihydroxyacetone phosphate + NADPH + H(+). It participates in membrane lipid metabolism; glycerophospholipid metabolism. Its function is as follows. Catalyzes the reduction of the glycolytic intermediate dihydroxyacetone phosphate (DHAP) to sn-glycerol 3-phosphate (G3P), the key precursor for phospholipid synthesis. The sequence is that of Glycerol-3-phosphate dehydrogenase [NAD(P)+] from Onion yellows phytoplasma (strain OY-M).